The sequence spans 432 residues: Keratin, type I cytoskeletal 17 (432 aa).

Positions 1-24 (MTTSIRQFTSSSSIKGSSGLGGGS) are disordered. The tract at residues 1-83 (MTTSIRQFTS…GGVDGLLAGG (83 aa)) is head. A phosphoserine mark is found at serine 12 and serine 13. A Glycyl lysine isopeptide (Lys-Gly) (interchain with G-Cter in SUMO1); alternate cross-link involves residue lysine 15. A Glycyl lysine isopeptide (Lys-Gly) (interchain with G-Cter in SUMO2); alternate cross-link involves residue lysine 15. Residues serine 25, serine 32, and serine 39 each carry the phosphoserine modification. The residue at position 44 (serine 44) is a Phosphoserine; by RPS6KA1. The segment at 84–120 (EKATMQNLNDRLASYLDKVRALEEANTELEVKIRDWY) is coil 1A. Residues 84–395 (EKATMQNLND…RLLEGEDAHL (312 aa)) form the IF rod domain. Residues 102-116 (VRALEEANTELEVKI) form a peptide epitope S1; induces T-cell and keratinocyte proliferation and IFN-gamma production region. Threonine 110 bears the Phosphothreonine mark. The interval 121 to 138 (QRQAPGPARDYSQYYRTI) is linker 1. Residues 139 to 230 (EELQNKILTA…NHEEEMNALR (92 aa)) are coil 1B. Positions 153–167 (ANILLQIDNARLAAD) are peptide epitope S2; induces T-cell proliferation and IFN-gamma production. The interval 231–250 (GQVGGEINVEMDAAPGVDLS) is linker 12. The interval 251–392 (RILNEMRDQY…TYRRLLEGED (142 aa)) is coil 2. A Glycyl lysine isopeptide (Lys-Gly) (interchain with G-Cter in SUMO2) cross-link involves residue lysine 278. Threonine 279 is subject to Phosphothreonine. A Phosphoserine modification is found at serine 323. The peptide epitope S4; induces T-cell and keratinocyte proliferation and IFN-gamma production stretch occupies residues 332-346 (ENRYCVQLSQIQGLI). The tract at residues 393 to 432 (AHLTQYKKEPVTTRQVRTIVEEVQDGKVISSREQVHQTTR) is tail. Glycyl lysine isopeptide (Lys-Gly) (interchain with G-Cter in SUMO1); alternate cross-links involve residues lysine 399, lysine 400, and lysine 419. Residues lysine 399, lysine 400, and lysine 419 each participate in a glycyl lysine isopeptide (Lys-Gly) (interchain with G-Cter in SUMO2); alternate cross-link.

Belongs to the intermediate filament family. In terms of assembly, heterodimer of a type I and a type II keratin. KRT17 associates with KRT6 isomers (KRT6A or KRT6B). Interacts with TRADD and SFN. In terms of processing, phosphorylation at Ser-44 occurs in a growth- and stress-dependent fashion in skin keratinocytes, it has no effect on filament organization. As to expression, expressed in the outer root sheath and medulla region of hair follicle specifically from eyebrow and beard, digital pulp, nail matrix and nail bed epithelium, mucosal stratified squamous epithelia and in basal cells of oral epithelium, palmoplantar epidermis and sweat and mammary glands. Also expressed in myoepithelium of prostate, basal layer of urinary bladder, cambial cells of sebaceous gland and in exocervix (at protein level).

The protein resides in the cytoplasm. In terms of biological role, type I keratin involved in the formation and maintenance of various skin appendages, specifically in determining shape and orientation of hair. Required for the correct growth of hair follicles, in particular for the persistence of the anagen (growth) state. Modulates the function of TNF-alpha in the specific context of hair cycling. Regulates protein synthesis and epithelial cell growth through binding to the adapter protein SFN and by stimulating Akt/mTOR pathway. Involved in tissue repair. May be a marker of basal cell differentiation in complex epithelia and therefore indicative of a certain type of epithelial 'stem cells'. Acts as a promoter of epithelial proliferation by acting a regulator of immune response in skin: promotes Th1/Th17-dominated immune environment contributing to the development of basaloid skin tumors. May act as an autoantigen in the immunopathogenesis of psoriasis, with certain peptide regions being a major target for autoreactive T-cells and hence causing their proliferation. The chain is Keratin, type I cytoskeletal 17 (KRT17) from Homo sapiens (Human).